The chain runs to 372 residues: Alanine dehydrogenase 2 (372 aa).

The active site involves His95. 169–199 (KVTIIGGGQAGTNAAKIALGLGADVTILDVN) serves as a coordination point for NAD(+).

The protein belongs to the AlaDH/PNT family.

The catalysed reaction is L-alanine + NAD(+) + H2O = pyruvate + NH4(+) + NADH + H(+). It participates in amino-acid degradation; L-alanine degradation via dehydrogenase pathway; NH(3) and pyruvate from L-alanine: step 1/1. Functionally, may play a role in cell wall synthesis as L-alanine is an important constituent of the peptidoglycan layer. This chain is Alanine dehydrogenase 2 (ald2), found in Staphylococcus aureus (strain MRSA252).